Reading from the N-terminus, the 228-residue chain is L-ribulose-5-phosphate 4-epimerase UlaF (228 aa).

Substrate is bound by residues 26 to 27 (GN), 43 to 44 (SG), and 72 to 73 (SS). Zn(2+) contacts are provided by aspartate 74, histidine 93, and histidine 95. Aspartate 118 acts as the Proton donor/acceptor in catalysis. Histidine 167 serves as a coordination point for Zn(2+). Residue tyrosine 225 is the Proton donor/acceptor of the active site.

The protein belongs to the aldolase class II family. AraD/FucA subfamily. The cofactor is Zn(2+).

It carries out the reaction L-ribulose 5-phosphate = D-xylulose 5-phosphate. Its pathway is cofactor degradation; L-ascorbate degradation; D-xylulose 5-phosphate from L-ascorbate: step 4/4. Its function is as follows. Catalyzes the isomerization of L-ribulose 5-phosphate to D-xylulose 5-phosphate. Is involved in the anaerobic L-ascorbate utilization. In Salmonella paratyphi B (strain ATCC BAA-1250 / SPB7), this protein is L-ribulose-5-phosphate 4-epimerase UlaF.